We begin with the raw amino-acid sequence, 131 residues long: Large ribosomal subunit protein eL32 (131 aa).

It belongs to the eukaryotic ribosomal protein eL32 family.

The polypeptide is Large ribosomal subunit protein eL32 (rpl32e) (Sulfurisphaera tokodaii (strain DSM 16993 / JCM 10545 / NBRC 100140 / 7) (Sulfolobus tokodaii)).